We begin with the raw amino-acid sequence, 900 residues long: Alanine--tRNA ligase (900 aa).

Zn(2+) is bound by residues H587, H591, C691, and H695.

The protein belongs to the class-II aminoacyl-tRNA synthetase family. It depends on Zn(2+) as a cofactor.

It localises to the cytoplasm. The enzyme catalyses tRNA(Ala) + L-alanine + ATP = L-alanyl-tRNA(Ala) + AMP + diphosphate. Functionally, catalyzes the attachment of alanine to tRNA(Ala) in a two-step reaction: alanine is first activated by ATP to form Ala-AMP and then transferred to the acceptor end of tRNA(Ala). Also edits incorrectly charged Ser-tRNA(Ala) and Gly-tRNA(Ala) via its editing domain. This is Alanine--tRNA ligase from Aeropyrum pernix (strain ATCC 700893 / DSM 11879 / JCM 9820 / NBRC 100138 / K1).